We begin with the raw amino-acid sequence, 1171 residues long: ATP-dependent helicase/deoxyribonuclease subunit B (1171 aa).

The 343-residue stretch at 1 to 343 (MSLRFVIGRA…LVAEENYRYR (343 aa)) folds into the UvrD-like helicase ATP-binding domain. Position 8 to 15 (8 to 15 (GRAGSGKS)) interacts with ATP. In terms of domain architecture, UvrD-like helicase C-terminal spans 281-587 (MEQPRFHSPA…QFANIPPSLD (307 aa)). 4 residues coordinate [4Fe-4S] cluster: cysteine 805, cysteine 1129, cysteine 1132, and cysteine 1138.

Belongs to the helicase family. AddB/RexB type 1 subfamily. Heterodimer of AddA and AddB. Mg(2+) serves as cofactor. It depends on [4Fe-4S] cluster as a cofactor.

Its function is as follows. The heterodimer acts as both an ATP-dependent DNA helicase and an ATP-dependent, dual-direction single-stranded exonuclease. Recognizes the chi site generating a DNA molecule suitable for the initiation of homologous recombination. The AddB subunit has 5' -&gt; 3' nuclease activity but not helicase activity. The sequence is that of ATP-dependent helicase/deoxyribonuclease subunit B from Bacillus thuringiensis (strain Al Hakam).